Here is a 154-residue protein sequence, read N- to C-terminus: Probable chemoreceptor glutamine deamidase CheD (154 aa).

Belongs to the CheD family.

It catalyses the reaction L-glutaminyl-[protein] + H2O = L-glutamyl-[protein] + NH4(+). In terms of biological role, probably deamidates glutamine residues to glutamate on methyl-accepting chemotaxis receptors (MCPs), playing an important role in chemotaxis. This is Probable chemoreceptor glutamine deamidase CheD from Methanococcus maripaludis (strain C6 / ATCC BAA-1332).